We begin with the raw amino-acid sequence, 715 residues long: Photosystem I P700 chlorophyll a apoprotein A1 (715 aa).

8 consecutive transmembrane segments (helical) span residues 60-83 (VFSAHFGQLAIIFIWLSGMYFHGA), 146-169 (LYSTAIGGLIFAALMLFAGWFHYH), 185-209 (LNHHLAGLLGLGSLSWAGHQVHVSL), 281-299 (TVHHHLAIAVLFLIAGHMY), 336-359 (WHAQLALNLAMLGSLTIIVAHHMY), 375-401 (LSLFTHHMWIGGFLVVGAAAHAAIFMV), 423-445 (AIISHLNWACIFLGFHSFGLYIH), and 521-539 (FLVHHIHAFTIHVTVLILL). The [4Fe-4S] cluster site is built by cysteine 563 and cysteine 572. 2 helical membrane-spanning segments follow: residues 579 to 600 (HVFLGLFWMYNAISVVIFHFSW) and 654 to 676 (LSAYGLLFLGAHFVWAFSLMFLF). Histidine 665 contributes to the chlorophyll a' binding site. Residues methionine 673 and tyrosine 681 each coordinate chlorophyll a. Tryptophan 682 contributes to the phylloquinone binding site. A helical transmembrane segment spans residues 714 to 715 (AE).

Belongs to the PsaA/PsaB family. In terms of assembly, the PsaA/B heterodimer binds the P700 chlorophyll special pair and subsequent electron acceptors. PSI consists of a core antenna complex that captures photons, and an electron transfer chain that converts photonic excitation into a charge separation. The eukaryotic PSI reaction center is composed of at least 11 subunits. The cofactor is P700 is a chlorophyll a/chlorophyll a' dimer, A0 is one or more chlorophyll a, A1 is one or both phylloquinones and FX is a shared 4Fe-4S iron-sulfur center..

The protein localises to the plastid. The protein resides in the chloroplast thylakoid membrane. The enzyme catalyses reduced [plastocyanin] + hnu + oxidized [2Fe-2S]-[ferredoxin] = oxidized [plastocyanin] + reduced [2Fe-2S]-[ferredoxin]. PsaA and PsaB bind P700, the primary electron donor of photosystem I (PSI), as well as the electron acceptors A0, A1 and FX. PSI is a plastocyanin-ferredoxin oxidoreductase, converting photonic excitation into a charge separation, which transfers an electron from the donor P700 chlorophyll pair to the spectroscopically characterized acceptors A0, A1, FX, FA and FB in turn. Oxidized P700 is reduced on the lumenal side of the thylakoid membrane by plastocyanin. The protein is Photosystem I P700 chlorophyll a apoprotein A1 of Phlegmariurus squarrosus (Rock tassel fern).